The chain runs to 264 residues: uncharacterized protein (264 aa).

Helical transmembrane passes span 48 to 68, 112 to 132, and 142 to 162; these read LTIT…LLVF, ITPS…FLLA, and LPIA…SYLI. Residue Ser260 is modified to Phosphoserine.

The protein localises to the membrane. This is an uncharacterized protein from Schizosaccharomyces pombe (strain 972 / ATCC 24843) (Fission yeast).